We begin with the raw amino-acid sequence, 515 residues long: MLEKLSFLLHKFPLVSKCGFIKKLASESSNDSNIIRIPDFPGGAEGFELVIKFCYDISFEINTENIAMLLCAAEYLEMTEEHSVENLVETIEVYLNEVILKSLSKSVKVLQKSQDLLPIAERVRLVDRCIDSIAYAICQESQSNEDIVDWWADDLAVLKIDMFRRVLVAMIARGFKRYSLGPVLKLYAEKALRGLDIFGKEAKKMEAEQEHEKRLILETIVSLLPRERNSVSVSFLSILLRAAIYLETTVACRLDLEKRMGLQLRQAVIDDLLIPYYSFNGDNTMLDVDTVQRILMNYLEFEVEGNSADFASDIGELMETYLAEIASDRNINFAKFIGFAECIPKQSRMYRAIDIFLKTHPNISEVEKKKVCSLMDCKKLSRDVYAHAAQNDRFQENLSNSDSPAPATAEKTLSPPELSSYKNELSKLNRENQYLKLELLKVKMKFKELEKEKAFEVMSGSDCSSSVSTASVAKPRLPRKSFINSVSQKLGKLINPFGLKQGQTKQPKSRRHSIS.

The region spanning 1 to 63 (MLEKLSFLLH…CYDISFEINT (63 aa)) is the BTB domain. Residues 149–409 (DWWADDLAVL…NSDSPAPATA (261 aa)) form the NPH3 domain. Tyr-350 is subject to Phosphotyrosine. The segment at 395-417 (QENLSNSDSPAPATAEKTLSPPE) is disordered. Positions 418 to 452 (LSSYKNELSKLNRENQYLKLELLKVKMKFKELEKE) form a coiled coil. The disordered stretch occupies residues 494–515 (INPFGLKQGQTKQPKSRRHSIS).

It belongs to the NPH3 family.

The protein operates within protein modification; protein ubiquitination. May act as a substrate-specific adapter of an E3 ubiquitin-protein ligase complex (CUL3-RBX1-BTB) which mediates the ubiquitination and subsequent proteasomal degradation of target proteins. The chain is Putative BTB/POZ domain-containing protein At3g49970 from Arabidopsis thaliana (Mouse-ear cress).